Consider the following 155-residue polypeptide: Deoxyuridine 5'-triphosphate nucleotidohydrolase (155 aa).

Residues 71 to 73 (RSG), Asn-84, 88 to 90 (TID), and Lys-98 each bind substrate.

Belongs to the dUTPase family. Requires Mg(2+) as cofactor.

It catalyses the reaction dUTP + H2O = dUMP + diphosphate + H(+). The protein operates within pyrimidine metabolism; dUMP biosynthesis; dUMP from dCTP (dUTP route): step 2/2. This enzyme is involved in nucleotide metabolism: it produces dUMP, the immediate precursor of thymidine nucleotides and it decreases the intracellular concentration of dUTP so that uracil cannot be incorporated into DNA. The chain is Deoxyuridine 5'-triphosphate nucleotidohydrolase from Corynebacterium jeikeium (strain K411).